The following is a 528-amino-acid chain: UDP-glucuronosyltransferase 1A9 (528 aa).

The first 23 residues, 1-23 (MAPVAFPTSFFLCLLLASGLAQA), serve as a signal peptide directing secretion. Asn-69 carries N-linked (GlcNAc...) asparagine glycosylation. Lys-97 is modified (N6-succinyllysine). Residues Asn-290 and Asn-428 are each glycosylated (N-linked (GlcNAc...) asparagine). Residues 486–506 (VIGFLLAIVLTVVFIVFKCCA) form a helical membrane-spanning segment.

It belongs to the UDP-glycosyltransferase family. As to quaternary structure, homodimer. Homooligomer. Interacts with UGT1A1, UGT1A3, UGT1A4, UGT1A6, UGT1A7, UGT1A8 and UGT1A10 to form heterodimers. As to expression, highly expressed in liver and at lower levels in stomach and kidney.

Its subcellular location is the endoplasmic reticulum membrane. It catalyses the reaction glucuronate acceptor + UDP-alpha-D-glucuronate = acceptor beta-D-glucuronoside + UDP + H(+). It carries out the reaction 2-hydroxy-17beta-estradiol + UDP-alpha-D-glucuronate = 2-hydroxy-17beta-estradiol 3-O-(beta-D-glucuronate) + UDP + H(+). The enzyme catalyses 4-hydroxy-17beta-estradiol + UDP-alpha-D-glucuronate = 17beta-estradiol 4-O-(beta-D-glucuronate) + UDP + H(+). The catalysed reaction is 2-hydroxyestrone + UDP-alpha-D-glucuronate = 2-hydroxyestrone 3-O-(beta-D-glucuronate) + UDP + H(+). It catalyses the reaction 4-hydroxyestrone + UDP-alpha-D-glucuronate = estrone 4-O-(beta-D-glucuronate) + UDP + H(+). It carries out the reaction prunetin + UDP-alpha-D-glucuronate = prunetin-5-O-beta-D-glucuronide + UDP. The enzyme catalyses 8-iso-prostaglandin F2alpha + UDP-alpha-D-glucuronate = 8-iso-prostaglandin F2alpha-glucuronide + UDP + H(+). The catalysed reaction is 5-epi-5-F2t-IsoP + UDP-alpha-D-glucuronate = 5-epi-5-F2t-IsoP-glucuronide + UDP + H(+). It catalyses the reaction (5Z,8Z,11Z,14Z)-eicosatetraenoate + UDP-alpha-D-glucuronate = O-[(5Z),(8Z),(11Z),(14Z)-eicosatetraenoyl]-beta-D-glucuronate + UDP. It carries out the reaction 15-hydroxy-(5Z,8Z,11Z,13E)-eicosatetraenoate + UDP-alpha-D-glucuronate = 15-O-(beta-D-glucuronosyl)-(5Z,8Z,11Z,14Z)-eicosatetraenoate + UDP + H(+). The enzyme catalyses prostaglandin B1 + UDP-alpha-D-glucuronate = 15-O-(beta-D-glucuronosyl)-prostaglandin B1 + UDP + H(+). The catalysed reaction is (E)-ferulate + UDP-alpha-D-glucuronate = (E)-4-O-(beta-D-glucuronosyl)-ferulate + UDP + H(+). It catalyses the reaction (E)-ferulate + UDP-alpha-D-glucuronate = (E)-ferulic acid beta-D-glucuronate ester + UDP. It carries out the reaction candesartan + UDP-alpha-D-glucuronate = candesartan O-beta-D-glucuronoside + UDP. The enzyme catalyses SN-38 + UDP-alpha-D-glucuronate = SN-38 O-beta-D-glucuronide + UDP + H(+). The catalysed reaction is mycophenolate + UDP-alpha-D-glucuronate = mycophenolate 7-O-beta-D-glucuronide + UDP + H(+). Functionally, UDP-glucuronosyltransferase (UGT) that catalyzes phase II biotransformation reactions in which lipophilic substrates are conjugated with glucuronic acid to increase the metabolite's water solubility, thereby facilitating excretion into either the urine or bile. Essential for the elimination and detoxification of drugs, xenobiotics and endogenous compounds. Catalyzes the glucuronidation of endogenous estrogen hormones such as estradiol and estrone. Involved in the glucuronidation of arachidonic acid (AA) and AA-derived eicosanoids including 15-HETE, PGB1 and F2-isoprostanes (8-iso-PGF2alpha and 5-epi-5-F2t-IsoP). Glucuronates the phytochemical ferulic acid efficently at both the phenolic or the carboxylic acid group. Also catalyzes the glucuronidation of the isoflavones genistein, daidzein, glycitein, formononetin, biochanin A and prunetin, which are phytoestrogens with anticancer and cardiovascular properties. Involved in the glucuronidation of the AGTR1 angiotensin receptor antagonist caderastan, a drug which can inhibit the effect of angiotensin II. Involved in the biotransformation of 7-ethyl-10-hydroxycamptothecin (SN-38), the pharmacologically active metabolite of the anticancer drug irinotecan. Also metabolizes mycophenolate, an immunosuppressive agent. The protein is UDP-glucuronosyltransferase 1A9 of Mus musculus (Mouse).